We begin with the raw amino-acid sequence, 204 residues long: AFG2-interacting ribosome maturation factor (204 aa).

In terms of assembly, part of the 55LCC heterohexameric ATPase complex. Does not associate with pre-60S ribosomal particles.

The protein resides in the nucleus. It localises to the cytoplasm. In terms of biological role, part of the 55LCC heterohexameric ATPase complex which is chromatin-associated and promotes replisome proteostasis to maintain replication fork progression and genome stability. Required for replication fork progression, sister chromatid cohesion, and chromosome stability. The ATPase activity is specifically enhanced by replication fork DNA and is coupled to cysteine protease-dependent cleavage of replisome substrates in response to replication fork damage. Uses ATPase activity to process replisome substrates in S-phase, facilitating their proteolytic turnover from chromatin to ensure DNA replication and mitotic fidelity. Involved in the cytoplasmic maturation steps of pre-60S ribosomal particles by promoting the release of shuttling protein RSL24D1/RLP24 from the pre-ribosomal particles. This chain is AFG2-interacting ribosome maturation factor (airim), found in Xenopus tropicalis (Western clawed frog).